Consider the following 122-residue polypeptide: ATP synthase epsilon chain (122 aa).

It belongs to the ATPase epsilon chain family. F-type ATPases have 2 components, CF(1) - the catalytic core - and CF(0) - the membrane proton channel. CF(1) has five subunits: alpha(3), beta(3), gamma(1), delta(1), epsilon(1). CF(0) has three main subunits: a, b and c.

The protein resides in the cell membrane. Produces ATP from ADP in the presence of a proton gradient across the membrane. In Rhodococcus erythropolis (strain PR4 / NBRC 100887), this protein is ATP synthase epsilon chain.